Reading from the N-terminus, the 552-residue chain is Probable protein kinase UbiB (552 aa).

One can recognise a Protein kinase domain in the interval 121–504 (HFDTVPLASA…QGLQRRVVNA (384 aa)). ATP is bound by residues 127–135 (LASASISQV) and Lys-149. Asp-284 acts as the Proton acceptor in catalysis. Helical transmembrane passes span 501 to 521 (VVNAIVGSGLLVAAAVLYGLH) and 530 to 550 (IPVWSLISGCVGALALFSAWW).

Belongs to the ABC1 family. UbiB subfamily.

The protein localises to the cell inner membrane. The protein operates within cofactor biosynthesis; ubiquinone biosynthesis [regulation]. Is probably a protein kinase regulator of UbiI activity which is involved in aerobic coenzyme Q (ubiquinone) biosynthesis. This is Probable protein kinase UbiB from Xylella fastidiosa (strain M12).